Here is a 98-residue protein sequence, read N- to C-terminus: NADH-ubiquinone oxidoreductase chain 4L (98 aa).

3 consecutive transmembrane segments (helical) span residues 2 to 22 (PSIS…MLIF), 29 to 49 (SLLC…LTIL), and 61 to 81 (ILLL…LVTV).

The protein belongs to the complex I subunit 4L family. As to quaternary structure, core subunit of respiratory chain NADH dehydrogenase (Complex I) which is composed of 45 different subunits.

It localises to the mitochondrion inner membrane. The catalysed reaction is a ubiquinone + NADH + 5 H(+)(in) = a ubiquinol + NAD(+) + 4 H(+)(out). In terms of biological role, core subunit of the mitochondrial membrane respiratory chain NADH dehydrogenase (Complex I) which catalyzes electron transfer from NADH through the respiratory chain, using ubiquinone as an electron acceptor. Part of the enzyme membrane arm which is embedded in the lipid bilayer and involved in proton translocation. This Eulemur rubriventer (Red-bellied lemur) protein is NADH-ubiquinone oxidoreductase chain 4L (MT-ND4L).